A 449-amino-acid polypeptide reads, in one-letter code: uncharacterized protein (449 aa).

Over residues 1–13 (MPKAPKTKLHHAP) the composition is skewed to basic residues. A disordered region spans residues 1-125 (MPKAPKTKLH…SQEEEEYEEL (125 aa)). Phosphoserine is present on Ser22. The segment covering 73-84 (KPSQISAFISNG) has biased composition (polar residues). Ser156 is subject to Phosphoserine.

Belongs to the bystin family.

This is an uncharacterized protein from Schizosaccharomyces pombe (strain 972 / ATCC 24843) (Fission yeast).